Reading from the N-terminus, the 110-residue chain is FMRFamide-like neuropeptides 11 (110 aa).

The first 22 residues, 1 to 22, serve as a signal peptide directing secretion; the sequence is MTQFSALALLLIVFVAASFAQS. A propeptide spanning residues 23–29 is cleaved from the precursor; it reads YDDVSAE. A phenylalanine amide mark is found at F40 and F54. Residues 60–85 form a disordered region; the sequence is LDEEDFAPESPLQGKRNGAPQPFVRF. Position 72 is a glutamine amide (Q72). Residue F85 is modified to Phenylalanine amide. The propeptide occupies 88–110; sequence SGQLDHMHDLLSTLQKLKFANNK.

This sequence belongs to the FARP (FMRFamide related peptide) family. As to expression, each flp gene is expressed in a distinct set of neurons. Flp-11 is expressed in the DD, VD and DVB motor neurons, the PVC and URX interneurons, and the AUA, BAG, DA, LUA, and SAB neurons. Also expressed in head muscle, socket or sheath cells and uterine cells. Expressed exclusively in PHC sensory neurons in males. Expressed in AVK and RIS interneurons.

Its subcellular location is the secreted. Its function is as follows. FMRFamides and FMRFamide-like peptides are neuropeptides. Induces sleep-like quiescence behavior following release from RIS interneuron. Helps to sustain locomotion stop after gamma-aminobutyric acid (GABA) induces fast slowing response. Inhibits the late-stage body bend swimming frequency in animals through several receptors including frpr-3, npr-4 and npr-22. Functionally, potent inhibitor of the activity of the dissected pharyngeal myogenic muscle system. Acts as a ligand for the npr-22 receptor in vitro. In terms of biological role, acts as a ligand for the npr-22 receptor in vitro. The protein is FMRFamide-like neuropeptides 11 of Caenorhabditis elegans.